Reading from the N-terminus, the 738-residue chain is Cleavage and polyadenylation specificity factor subunit 2 (738 aa).

The protein belongs to the metallo-beta-lactamase superfamily. RNA-metabolizing metallo-beta-lactamase-like family. CPSF2/YSH1 subfamily. In terms of assembly, CPSF is a heterotetramer composed of four distinct subunits 160, 100, 70 and 30 kDa.

Its subcellular location is the nucleus. Its function is as follows. CPSF plays a key role in pre-mRNA 3'-end formation, recognizing the AAUAAA signal sequence and interacting with poly(A)polymerase and other factors to bring about cleavage and poly(A) addition. The sequence is that of Cleavage and polyadenylation specificity factor subunit 2 from Oryza sativa subsp. japonica (Rice).